A 126-amino-acid chain; its full sequence is Arginine decarboxylase proenzyme (126 aa).

The active-site Schiff-base intermediate with substrate; via pyruvic acid is S74. S74 is subject to Pyruvic acid (Ser); by autocatalysis. H79 acts as the Proton acceptor; for processing activity in catalysis. C94 serves as the catalytic Proton donor; for catalytic activity.

The protein belongs to the prokaryotic AdoMetDC family. Type 1 subfamily. Heterooctamer of four alpha and four beta chains arranged as a tetramer of alpha/beta heterodimers. Pyruvate serves as cofactor. In terms of processing, is synthesized initially as an inactive proenzyme. Formation of the active enzyme involves a self-maturation process in which the active site pyruvoyl group is generated from an internal serine residue via an autocatalytic post-translational modification. Two non-identical subunits are generated from the proenzyme in this reaction, and the pyruvate is formed at the N-terminus of the alpha chain, which is derived from the carboxyl end of the proenzyme. The post-translation cleavage follows an unusual pathway, termed non-hydrolytic serinolysis, in which the side chain hydroxyl group of the serine supplies its oxygen atom to form the C-terminus of the beta chain, while the remainder of the serine residue undergoes an oxidative deamination to produce ammonia and the pyruvoyl group blocking the N-terminus of the alpha chain.

It catalyses the reaction L-arginine + H(+) = agmatine + CO2. It participates in amine and polyamine biosynthesis; agmatine biosynthesis; agmatine from L-arginine: step 1/1. Specifically catalyzes the decarboxylation of L-arginine to agmatine. Has no S-adenosylmethionine decarboxylase (AdoMetDC) activity. In Pyrobaculum calidifontis (strain DSM 21063 / JCM 11548 / VA1), this protein is Arginine decarboxylase proenzyme.